A 277-amino-acid chain; its full sequence is Large ribosomal subunit protein uL2 (277 aa).

Residues 222–277 are disordered; it reads GSVMNPNDHPHGGGEGKAPVGRKAPSTPWGKPALGLKTRNKKAKSDKLIVRRRNQK.

This sequence belongs to the universal ribosomal protein uL2 family. In terms of assembly, part of the 50S ribosomal subunit. Forms a bridge to the 30S subunit in the 70S ribosome.

Functionally, one of the primary rRNA binding proteins. Required for association of the 30S and 50S subunits to form the 70S ribosome, for tRNA binding and peptide bond formation. It has been suggested to have peptidyltransferase activity; this is somewhat controversial. Makes several contacts with the 16S rRNA in the 70S ribosome. The sequence is that of Large ribosomal subunit protein uL2 from Streptococcus agalactiae serotype Ia (strain ATCC 27591 / A909 / CDC SS700).